The following is a 1390-amino-acid chain: MLAKIGLLASILVLNLVGQITPQFSENLPDPDPQSGQQPQNYQPSYNKDYSPRYNPLYTGQQSADPNQFDNTLVDGQSPNTYKGYYDGRAGGGGLGGNVVGPGNNLGGLGPQYDPFNRNSIGSAGVSYRDAYTDEDNFCPEHWVSFRQTCYRFIRSPKRNWAEAKKICKAHNADLINVDNVEKHSFILKNLILQNQRQNRFFISARQTGPLNWVNDDNTQLVQIEDSFSMDEQVPLENEDLHDNRFLVQNDLNNQNINNPNQFYNSLPGTVNQRNQNNLRGFIGPNQPYGDNRYVRDRVVYAFSKKRDRWMFMPAYEIELNLFICESKVLYSSDNVNIKLDDKRPYHYGLDINDMERIPRGPYFVKQPNDTTFDVNKNRLINDVTLSCLANGYPTPSYTWYREVYVDDRLEYQKIDPLAQDRYTISGGNLIIYEPKQALDQGAYHCVAENKFGRIRSESAHLNFGFIMEFNLKRSAETSEMNWGKSIFCDPPQHYPDVRYYWARDYFPNFVEEDQRVFVSRDGALYFSFIETVDRANYSCTVQTLVSDTGRNGPFFPLRVTPNSNYQALIFANTFPKVFPEAPVAGDEIRLECMAFGYPIPSYNWTRQGLPLQRNAYTINYGRVLIIQNATTNDNGEYSCTITNPRKTLMKSIYINIQMRPQFTIPLKDMIKDYNSDVTFICEAFAIPDANYTWYKNAERLDPANINRDRYIIQDNVLTIKFLEKDKDDAMYQCGAQNQLKTSFSSAQLRVLSMKPSFKKHPLESEVYAVYNGNTTIVCDPEAAPRPKFQWKKDGQVIGSGGHRRILPSGTLTISPTSRDDEGIYTCIASNQAGTDESHARVIVLQEIRFIETPPQRIVSKEHDLIFLHCEAAFDELLDIAYVWKHNGEVLKNNHDGTGRIIVDWNRLTVHNTSMRDAGDYECVVKSAVNEISSKTSVSIEGAPGAPGGVQVIQISKTKAIIEWVDGSHNGRAIRYYNILGRTNWNRTWVNVSTHVQAREVDRYTSRQQAEVVNLTPWSAYEFSVTAVNDLGIGTPSAPSPIYSTYEDKPYIAPRNVGGGGGKIGDLTITWDPLLPQEQHSHGIHYKVFWKLKGAIEWASDEIKKQDHMGVAVVNIPLNNYYTEYEVKVQAINSVGKGPESEIAVIHSAEDMPQVAPQKPIALAYNSTCFNVTWQPIDMSRENIRGKLIGHRLKYWKTTHQEEDSVYYLSRTTRNWALIVGLQPDTYYFVKVMAYNAAGEGPESERFEERTYRKAPQKPPSSVHVYGINPSTVRVVWRYVSPSQDEEPVEGYKVRIWESDQNMITANNTIVPIGQKLESYINNLTPGKSYNMRVLAYSNGGDGRMSSPTLHFQMGKTTRNGANTRHGHNINTALILSTLLLISTFLYTSQ.

An N-terminal signal peptide occupies residues 1–18 (MLAKIGLLASILVLNLVG). The tract at residues 25 to 67 (SENLPDPDPQSGQQPQNYQPSYNKDYSPRYNPLYTGQQSADPN) is disordered. A compositionally biased stretch (polar residues) spans 58 to 67 (YTGQQSADPN). Ig-like C2-type domains lie at 362–463 (PYFV…AHLN), 468–561 (MEFN…LRVT), 576–656 (PKVF…IYIN), 661–745 (PQFT…TSFS), 756–843 (PSFK…ARVI), and 848–939 (IRFI…TSVS). The N-linked (GlcNAc...) asparagine glycan is linked to Asn369. 4 disulfide bridges follow: Cys388–Cys446, Cys489–Cys540, Cys593–Cys640, and Cys682–Cys734. Residues Asn537, Asn604, Asn629, Asn691, and Asn774 are each glycosylated (N-linked (GlcNAc...) asparagine). 2 disulfides stabilise this stretch: Cys779–Cys827 and Cys870–Cys923. Residues Asn912, Asn986, and Asn991 are each glycosylated (N-linked (GlcNAc...) asparagine). 4 consecutive Fibronectin type-III domains span residues 946-1048 (APGG…TYED), 1053-1151 (APRN…SAED), 1156-1254 (APQK…TYRK), and 1259-1357 (PPSS…MGKT). N-linked (GlcNAc...) asparagine glycosylation is found at Asn1166, Asn1171, and Asn1307. Ala1362 is lipidated: GPI-anchor amidated alanine. Residues 1363–1390 (NTRHGHNINTALILSTLLLISTFLYTSQ) constitute a propeptide, removed in mature form.

This sequence belongs to the immunoglobulin superfamily. Contactin family. As to quaternary structure, forms a complex with Nrg and Nrx. Forms a complex composed of septa junction proteins Nrx-IV/Nrx, Tsf2/MTf, Cont and Nrg during late embryogenesis. N-glycosylated. As to expression, expressed in ectodermally derived epithelial cells from stage 12. All these tissues, such as epidermis, hindgut, foregut, salivary glands and trachea, which contain pleated septate junctions. Expressed by ectodermally derived epithelial cells and along peripheral nerves. Not present in midline glial cells. Expressed in epithelial cells and glial cells of peripheral nerves.

It is found in the cell membrane. It localises to the cell junction. Its subcellular location is the septate junction. Its function is as follows. Required for organization of septate junctions and paracellular barrier functions. Septate junctions, which are the equivalent of vertebrates tight junctions, are characterized by regular arrays of transverse structures that span the intermembrane space and form a physical barrier to diffusion. This Drosophila melanogaster (Fruit fly) protein is Contactin (Cont).